We begin with the raw amino-acid sequence, 264 residues long: uncharacterized protein (264 aa).

2 disordered regions span residues methionine 1–glycine 52 and glycine 123–arginine 207. Positions alanine 29–serine 40 are enriched in low complexity. The segment covering histidine 144–serine 154 has biased composition (polar residues). The segment covering alanine 188 to arginine 197 has biased composition (basic residues).

This is an uncharacterized protein from Homo sapiens (Human).